The sequence spans 522 residues: Golgin subfamily A member 6-like protein 10 (522 aa).

The segment covering 1-11 (MWPQPRLPPHP) has biased composition (pro residues). Residues 1-77 (MWPQPRLPPH…DSATGIYGEG (77 aa)) are disordered. The segment covering 51 to 62 (NGSSPDTATSGG) has biased composition (polar residues). Residues 157-328 (SKVEQLQDET…RLCEQEKLPG (172 aa)) are a coiled coil. Basic and acidic residues predominate over residues 439–452 (KELEKSGGAEEPRG). The tract at residues 439 to 503 (KELEKSGGAE…TGEAAGGAEE (65 aa)) is disordered. Low complexity-rich tracts occupy residues 456-471 (AAAA…PQGA) and 489-503 (GEAV…GAEE).

Belongs to the GOLGA6 family.

This Homo sapiens (Human) protein is Golgin subfamily A member 6-like protein 10.